A 181-amino-acid polypeptide reads, in one-letter code: Putative ankyrin repeat protein RBE_0150 (181 aa).

ANK repeat units lie at residues 50-79 (IGQK…KLGT), 83-114 (LGRT…DINA), 118-147 (SGST…DYFT), and 151-180 (LGQT…AGYY).

This Rickettsia bellii (strain RML369-C) protein is Putative ankyrin repeat protein RBE_0150.